The primary structure comprises 152 residues: Deoxyuridine 5'-triphosphate nucleotidohydrolase (152 aa).

Residues 71–73 (RSG), Asn-84, 88–90 (LID), and Met-98 each bind substrate.

It belongs to the dUTPase family. Requires Mg(2+) as cofactor.

It carries out the reaction dUTP + H2O = dUMP + diphosphate + H(+). Its pathway is pyrimidine metabolism; dUMP biosynthesis; dUMP from dCTP (dUTP route): step 2/2. Functionally, this enzyme is involved in nucleotide metabolism: it produces dUMP, the immediate precursor of thymidine nucleotides and it decreases the intracellular concentration of dUTP so that uracil cannot be incorporated into DNA. The protein is Deoxyuridine 5'-triphosphate nucleotidohydrolase of Shewanella sp. (strain ANA-3).